Consider the following 539-residue polypeptide: Membrane protein insertase YidC (539 aa).

Residues 6–26 (VILAVALSFAVLLGWQFLFPP) traverse the membrane as a helical segment. The segment at 28–63 (PQQPAPAQQEQTAQPNQAVDSSVAGPVSNQLPDPAS) is disordered. Low complexity predominate over residues 32–45 (APAQQEQTAQPNQA). A compositionally biased stretch (polar residues) spans 54 to 63 (VSNQLPDPAS). A run of 3 helical transmembrane segments spans residues 349–369 (YGIAIILLTIVIKILFWPLSH), 421–441 (MLLQIPVFFGLYKALMGTVAL), and 496–516 (IMMFLPLVFTFMFLNFPSGLV).

Belongs to the OXA1/ALB3/YidC family. Type 1 subfamily. Interacts with the Sec translocase complex via SecD. Specifically interacts with transmembrane segments of nascent integral membrane proteins during membrane integration.

The protein resides in the cell inner membrane. Required for the insertion and/or proper folding and/or complex formation of integral membrane proteins into the membrane. Involved in integration of membrane proteins that insert both dependently and independently of the Sec translocase complex, as well as at least some lipoproteins. Aids folding of multispanning membrane proteins. This chain is Membrane protein insertase YidC, found in Maridesulfovibrio salexigens (strain ATCC 14822 / DSM 2638 / NCIMB 8403 / VKM B-1763) (Desulfovibrio salexigens).